The primary structure comprises 209 residues: Thiamine-phosphate synthase (209 aa).

Residues 35–39 and asparagine 67 contribute to the 4-amino-2-methyl-5-(diphosphooxymethyl)pyrimidine site; that span reads QLRNK. Aspartate 68 and aspartate 87 together coordinate Mg(2+). Serine 106 is a binding site for 4-amino-2-methyl-5-(diphosphooxymethyl)pyrimidine. 132-134 contributes to the 2-[(2R,5Z)-2-carboxy-4-methylthiazol-5(2H)-ylidene]ethyl phosphate binding site; the sequence is TGS. Lysine 135 lines the 4-amino-2-methyl-5-(diphosphooxymethyl)pyrimidine pocket. 2-[(2R,5Z)-2-carboxy-4-methylthiazol-5(2H)-ylidene]ethyl phosphate contacts are provided by residues glycine 163 and 183–184; that span reads IS.

The protein belongs to the thiamine-phosphate synthase family. Mg(2+) serves as cofactor.

It carries out the reaction 2-[(2R,5Z)-2-carboxy-4-methylthiazol-5(2H)-ylidene]ethyl phosphate + 4-amino-2-methyl-5-(diphosphooxymethyl)pyrimidine + 2 H(+) = thiamine phosphate + CO2 + diphosphate. The catalysed reaction is 2-(2-carboxy-4-methylthiazol-5-yl)ethyl phosphate + 4-amino-2-methyl-5-(diphosphooxymethyl)pyrimidine + 2 H(+) = thiamine phosphate + CO2 + diphosphate. It catalyses the reaction 4-methyl-5-(2-phosphooxyethyl)-thiazole + 4-amino-2-methyl-5-(diphosphooxymethyl)pyrimidine + H(+) = thiamine phosphate + diphosphate. Its pathway is cofactor biosynthesis; thiamine diphosphate biosynthesis; thiamine phosphate from 4-amino-2-methyl-5-diphosphomethylpyrimidine and 4-methyl-5-(2-phosphoethyl)-thiazole: step 1/1. Its function is as follows. Condenses 4-methyl-5-(beta-hydroxyethyl)thiazole monophosphate (THZ-P) and 2-methyl-4-amino-5-hydroxymethyl pyrimidine pyrophosphate (HMP-PP) to form thiamine monophosphate (TMP). The sequence is that of Thiamine-phosphate synthase from Chlorobium phaeovibrioides (strain DSM 265 / 1930) (Prosthecochloris vibrioformis (strain DSM 265)).